We begin with the raw amino-acid sequence, 91 residues long: Small ribosomal subunit protein bS18 (91 aa).

Belongs to the bacterial ribosomal protein bS18 family. Part of the 30S ribosomal subunit. Forms a tight heterodimer with protein bS6.

In terms of biological role, binds as a heterodimer with protein bS6 to the central domain of the 16S rRNA, where it helps stabilize the platform of the 30S subunit. This is Small ribosomal subunit protein bS18 from Gluconacetobacter diazotrophicus (strain ATCC 49037 / DSM 5601 / CCUG 37298 / CIP 103539 / LMG 7603 / PAl5).